The following is a 447-amino-acid chain: Serine--tRNA ligase (447 aa).

Thr-245–Glu-247 contributes to the L-serine binding site. ATP-binding positions include Arg-276–Glu-278 and Val-292. Residue Glu-299 participates in L-serine binding. Residue Glu-363–Ser-366 coordinates ATP. Residue Thr-398 participates in L-serine binding.

The protein belongs to the class-II aminoacyl-tRNA synthetase family. Type-1 seryl-tRNA synthetase subfamily. As to quaternary structure, homodimer. The tRNA molecule binds across the dimer.

The protein resides in the cytoplasm. It carries out the reaction tRNA(Ser) + L-serine + ATP = L-seryl-tRNA(Ser) + AMP + diphosphate + H(+). The catalysed reaction is tRNA(Sec) + L-serine + ATP = L-seryl-tRNA(Sec) + AMP + diphosphate + H(+). It participates in aminoacyl-tRNA biosynthesis; selenocysteinyl-tRNA(Sec) biosynthesis; L-seryl-tRNA(Sec) from L-serine and tRNA(Sec): step 1/1. Catalyzes the attachment of serine to tRNA(Ser). Is also able to aminoacylate tRNA(Sec) with serine, to form the misacylated tRNA L-seryl-tRNA(Sec), which will be further converted into selenocysteinyl-tRNA(Sec). The sequence is that of Serine--tRNA ligase from Pyrobaculum neutrophilum (strain DSM 2338 / JCM 9278 / NBRC 100436 / V24Sta) (Thermoproteus neutrophilus).